The primary structure comprises 784 residues: Transcription factor kayak (784 aa).

Composition is skewed to low complexity over residues 97–106 (QPTQSAYQQQ), 115–126 (NNNNNSNNNANM), and 198–227 (QQQQ…QQQQ). Disordered stretches follow at residues 97–126 (QPTQ…NANM), 196–231 (YNQQ…HLPT), 358–404 (PGSD…GNGS), and 421–464 (SGRG…KRRI). The span at 365-378 (SNGSWNEGQLNDDQ) shows a compositional bias: polar residues. The span at 380 to 397 (TTDTSSAATDSTSYQNGG) shows a compositional bias: low complexity. A compositionally biased stretch (polar residues) spans 421-438 (SGRGSGLAANSTTSNSAT). The 64-residue stretch at 459 to 522 (EEKRRIRRER…SQLEYVLQTH (64 aa)) folds into the bZIP domain. Positions 461–463 (KRR) are basic motif. Residues 464-471 (IRRERNKL) form a leucine-zipper region. Residue Ser594 is modified to Phosphoserine. Disordered stretches follow at residues 616 to 635 (QDGA…TPAK) and 759 to 784 (PTCS…LVSL).

This sequence belongs to the bZIP family. Fos subfamily. As to quaternary structure, homodimer. Heterodimer with Jra. The kay-Jra heterodimer binds more stably to the AP-1 site than either of the two proteins alone.

The protein resides in the nucleus. Its function is as follows. Developmentally regulated transcription factor AP-1 binds and recognizes the enhancer DNA sequence: 5'-TGA[CG]TCA-3'. May play a role in the function or determination of a particular subset of cells in the developing embryo. It is able to carry out its function either independently of or in conjunction with Jra. This is Transcription factor kayak from Drosophila mojavensis (Fruit fly).